Reading from the N-terminus, the 375-residue chain is Putative F-box protein At5g52620 (375 aa).

The F-box domain maps to Gly-5 to Ile-52.

This Arabidopsis thaliana (Mouse-ear cress) protein is Putative F-box protein At5g52620.